The following is a 214-amino-acid chain: Orotate phosphoribosyltransferase (214 aa).

Residues R125, K126, K129, H131, and 151-159 (EDTSTTGNS) each bind 5-phospho-alpha-D-ribose 1-diphosphate. Residues T155 and R183 each contribute to the orotate site.

The protein belongs to the purine/pyrimidine phosphoribosyltransferase family. PyrE subfamily. As to quaternary structure, homodimer. The cofactor is Mg(2+).

The catalysed reaction is orotidine 5'-phosphate + diphosphate = orotate + 5-phospho-alpha-D-ribose 1-diphosphate. Its pathway is pyrimidine metabolism; UMP biosynthesis via de novo pathway; UMP from orotate: step 1/2. Functionally, catalyzes the transfer of a ribosyl phosphate group from 5-phosphoribose 1-diphosphate to orotate, leading to the formation of orotidine monophosphate (OMP). This is Orotate phosphoribosyltransferase from Tropheryma whipplei (strain TW08/27) (Whipple's bacillus).